Reading from the N-terminus, the 326-residue chain is Probable GTP 3',8-cyclase (326 aa).

The region spanning 6–235 (LYGRPVLSLR…NRPRYIIRTQ (230 aa)) is the Radical SAM core domain. R15 is a binding site for GTP. [4Fe-4S] cluster-binding residues include C22, C26, and C29. A GTP-binding site is contributed by K62. G66 serves as a coordination point for S-adenosyl-L-methionine. Residue T92 participates in GTP binding. Position 116 (S116) interacts with S-adenosyl-L-methionine. Residue K153 participates in GTP binding. C253 and C256 together coordinate [4Fe-4S] cluster. Position 258 to 260 (258 to 260 (RLR)) interacts with GTP. Residue C270 participates in [4Fe-4S] cluster binding.

The protein belongs to the radical SAM superfamily. MoaA family. [4Fe-4S] cluster serves as cofactor.

It catalyses the reaction GTP + AH2 + S-adenosyl-L-methionine = (8S)-3',8-cyclo-7,8-dihydroguanosine 5'-triphosphate + 5'-deoxyadenosine + L-methionine + A + H(+). Its pathway is cofactor biosynthesis; molybdopterin biosynthesis. Catalyzes the cyclization of GTP to (8S)-3',8-cyclo-7,8-dihydroguanosine 5'-triphosphate. In Thermoplasma volcanium (strain ATCC 51530 / DSM 4299 / JCM 9571 / NBRC 15438 / GSS1), this protein is Probable GTP 3',8-cyclase.